Here is a 159-residue protein sequence, read N- to C-terminus: Heterocyst differentiation protein HetP (159 aa).

The segment at 1 to 50 (MNQNTTGITNYNKAINPQQFDKVVEAILAGKYSWACVLMLRFAGYNPMHY) is required to complement a hetP deletion.

It belongs to the HetP family. In terms of assembly, in bacterial two-hybrid assays interacts weakly with Asl1930, Alr2902 and Alr3234.

Its function is as follows. Promotes heterocyst differentiation and commitment when nitrogen is limiting. Interplay between the 4 HetP paralogs controls the timing of commitment to heterocyst formation and its duration. Epistatic analysis show that the 3 paralogs act upstream of hetP to delay commitment (asl1930, alr3234) or inhibit development (alr2902). Asl1930 and Alr3234 must also attenuate the activity of Alr2902. Required for heterocyst formation. Functions directly downstream of master regulator HetR to promote heterocyst differentiation, functioning downstream of patterning (cell choice). Partially functionally redundant with homologs alr2902 and asl1930 but not alr3234. Overexpression leads to more than wild-type levels of heterocysts. Overexpression in the absence of hetR partially bypasses hetR deletion, allowing differentiation of heterocysts, although they only fix nitrogen in the absence of oxygen (a Fox- Fix+ phenotype), suggesting they are not fully. This Nostoc sp. (strain PCC 7120 / SAG 25.82 / UTEX 2576) protein is Heterocyst differentiation protein HetP.